The primary structure comprises 177 residues: Adenine phosphoribosyltransferase (177 aa).

Belongs to the purine/pyrimidine phosphoribosyltransferase family. In terms of assembly, homodimer.

The protein localises to the cytoplasm. It catalyses the reaction AMP + diphosphate = 5-phospho-alpha-D-ribose 1-diphosphate + adenine. It functions in the pathway purine metabolism; AMP biosynthesis via salvage pathway; AMP from adenine: step 1/1. Functionally, catalyzes a salvage reaction resulting in the formation of AMP, that is energically less costly than de novo synthesis. This Chlorobium chlorochromatii (strain CaD3) protein is Adenine phosphoribosyltransferase.